Consider the following 380-residue polypeptide: Cytochrome b (380 aa).

4 helical membrane passes run 33 to 53 (FGSLLGLCLITQTLTGLFLAM), 77 to 98 (WLLRNIHANGASFFFICIYLHI), 113 to 133 (WNIGVLLLLLVMMTAFVGYVL), and 178 to 198 (FFTFHFLLPFIIMGTTMLHLL). Residues H83 and H97 each coordinate heme b. Heme b-binding residues include H182 and H196. H201 contacts a ubiquinone. 4 helical membrane-spanning segments follow: residues 226–246 (YKDLLGFTILLATLSALALLN), 288–308 (LGGVLALLFSILILVVVPTLH), 320–340 (SSQTLFWILVANMLVLTWIGG), and 347–367 (FIIIGQVASVLYFMLFLFFIP).

This sequence belongs to the cytochrome b family. The cytochrome bc1 complex contains 3 respiratory subunits (MT-CYB, CYC1 and UQCRFS1), 2 core proteins (UQCRC1 and UQCRC2) and probably 6 low-molecular weight proteins. The cofactor is heme b.

The protein localises to the mitochondrion inner membrane. In terms of biological role, component of the ubiquinol-cytochrome c reductase complex (complex III or cytochrome b-c1 complex) that is part of the mitochondrial respiratory chain. The b-c1 complex mediates electron transfer from ubiquinol to cytochrome c. Contributes to the generation of a proton gradient across the mitochondrial membrane that is then used for ATP synthesis. In Lepisosteus oculatus (Spotted gar), this protein is Cytochrome b (mt-cyb).